We begin with the raw amino-acid sequence, 156 residues long: Small ribosomal subunit protein uS7 (156 aa).

The protein belongs to the universal ribosomal protein uS7 family. As to quaternary structure, part of the 30S ribosomal subunit. Contacts proteins S9 and S11.

One of the primary rRNA binding proteins, it binds directly to 16S rRNA where it nucleates assembly of the head domain of the 30S subunit. Is located at the subunit interface close to the decoding center, probably blocks exit of the E-site tRNA. The protein is Small ribosomal subunit protein uS7 of Shewanella baltica (strain OS223).